A 163-amino-acid chain; its full sequence is Nucleotide-binding protein Dhaf_3127 (163 aa).

This sequence belongs to the YajQ family.

Nucleotide-binding protein. This chain is Nucleotide-binding protein Dhaf_3127, found in Desulfitobacterium hafniense (strain DSM 10664 / DCB-2).